The following is a 101-amino-acid chain: Small ubiquitin-related modifier 1 (101 aa).

An N-acetylserine modification is found at Ser2. Ser2 bears the Phosphoserine mark. Residue Lys7 forms a Glycyl lysine isopeptide (Lys-Gly) (interchain with G-Cter in SUMO1); alternate linkage. Lys7 participates in a covalent cross-link: Glycyl lysine isopeptide (Lys-Gly) (interchain with G-Cter in SUMO2); alternate. At Ser9 the chain carries Phosphoserine. Glycyl lysine isopeptide (Lys-Gly) (interchain with G-Cter in SUMO2) cross-links involve residues Lys16, Lys17, and Lys23. In terms of domain architecture, Ubiquitin-like spans 20–97 (EYIKLKVIGQ…IEVYHEQTGG (78 aa)). Residue Lys25 forms a Glycyl lysine isopeptide (Lys-Gly) (interchain with G-Cter in SUMO1) linkage. Ser32 carries the phosphoserine modification. Glycyl lysine isopeptide (Lys-Gly) (interchain with G-Cter in SUMO2) cross-links involve residues Lys37, Lys39, Lys45, and Lys46. Gly97 is covalently cross-linked (Glycyl lysine isopeptide (Gly-Lys) (interchain with K-? in acceptor proteins)). The propeptide occupies 98 to 101 (HSTV).

It belongs to the ubiquitin family. SUMO subfamily. In terms of assembly, covalently attached to KCNB1; UBE2I increases cross-linking with KCNB1 and PIAS1 decreases cross-links with KCNB1. Interacts with SAE2, RANBP2, PIAS1 and PIAS2. Interacts with PRKN. Covalently attached to a number of proteins such as IKFZ1, PML, RANGAP1, HIPK2, SP100, p53, p73-alpha, MDM2, JUN, DNMT3B and TDG. Also interacts with HIF1A, HIPK2, HIPK3, CHD3, EXOSC9, RAD51 and RAD52. Interacts with USP25 (via ts SIM domain); the interaction weakly sumoylates USP25. Interacts with SIMC1, CASP8AP2, RNF111 and SOBP (via SIM domains). Interacts with BHLHE40/DEC1. Interacts with RWDD3. Interacts with UBE2I/UBC9 and this interaction is enhanced in the presence of RWDD3. Interacts with MTA1. Interacts with SENP2. Interacts with HINT1. In terms of processing, cleavage of precursor form by SENP1, SENP2 is necessary for function. Post-translationally, polymeric SUMO1 chains undergo polyubiquitination by RNF4.

It localises to the nucleus membrane. Its subcellular location is the nucleus speckle. The protein resides in the cytoplasm. It is found in the nucleus. The protein localises to the PML body. It localises to the cell membrane. Ubiquitin-like protein that can be covalently attached to proteins as a monomer or a lysine-linked polymer. Covalent attachment via an isopeptide bond to its substrates requires prior activation by the E1 complex SAE1-SAE2 and linkage to the E2 enzyme UBE2I, and can be promoted by E3 ligases such as PIAS1-4, RANBP2 or CBX4. This post-translational modification on lysine residues of proteins plays a crucial role in a number of cellular processes such as nuclear transport, DNA replication and repair, mitosis and signal transduction. Involved for instance in targeting RANGAP1 to the nuclear pore complex protein RANBP2. Covalently attached to the voltage-gated potassium channel KCNB1; this modulates the gating characteristics of KCNB1. Polymeric SUMO1 chains are also susceptible to polyubiquitination which functions as a signal for proteasomal degradation of modified proteins. May also regulate a network of genes involved in palate development. Covalently attached to ZFHX3. The protein is Small ubiquitin-related modifier 1 (SUMO1) of Cervus nippon (Sika deer).